A 209-amino-acid chain; its full sequence is Ubiquitin-conjugating enzyme E2 S (209 aa).

The UBC core domain occupies 14 to 160 (QTIRQVMREL…ARMMTEIHAQ (147 aa)). Cys98 serves as the catalytic Glycyl thioester intermediate. Positions 164-209 (CGVGASGDAKDDDGPSTKKHAGLDKKLQDKKKEKLLKEKKRMLKRL) are disordered. Residues 171–199 (DAKDDDGPSTKKHAGLDKKLQDKKKEKLL) show a composition bias toward basic and acidic residues. The span at 200-209 (KEKKRMLKRL) shows a compositional bias: basic residues.

It belongs to the ubiquitin-conjugating enzyme family.

It catalyses the reaction S-ubiquitinyl-[E1 ubiquitin-activating enzyme]-L-cysteine + [E2 ubiquitin-conjugating enzyme]-L-cysteine = [E1 ubiquitin-activating enzyme]-L-cysteine + S-ubiquitinyl-[E2 ubiquitin-conjugating enzyme]-L-cysteine.. It functions in the pathway protein modification; protein ubiquitination. Its function is as follows. Catalyzes the covalent attachment of ubiquitin to other proteins. Acts as an essential factor of the anaphase promoting complex/cyclosome (APC/C), a cell cycle-regulated ubiquitin ligase that controls progression through mitosis. Acts by specifically elongating polyubiquitin chains initiated by the E2 enzyme vih/UbcH10 on APC/C substrates, enhancing the degradation of APC/C substrates by the proteasome and promoting mitotic exit. The sequence is that of Ubiquitin-conjugating enzyme E2 S from Drosophila yakuba (Fruit fly).